Reading from the N-terminus, the 318-residue chain is 4-hydroxy-3-methylbut-2-enyl diphosphate reductase (318 aa).

Cysteine 12 is a binding site for [4Fe-4S] cluster. The (2E)-4-hydroxy-3-methylbut-2-enyl diphosphate site is built by histidine 41 and histidine 74. Dimethylallyl diphosphate contacts are provided by histidine 41 and histidine 74. The isopentenyl diphosphate site is built by histidine 41 and histidine 74. Cysteine 96 provides a ligand contact to [4Fe-4S] cluster. Histidine 124 serves as a coordination point for (2E)-4-hydroxy-3-methylbut-2-enyl diphosphate. Histidine 124 serves as a coordination point for dimethylallyl diphosphate. Histidine 124 provides a ligand contact to isopentenyl diphosphate. The Proton donor role is filled by glutamate 126. Threonine 168 is a (2E)-4-hydroxy-3-methylbut-2-enyl diphosphate binding site. Cysteine 198 lines the [4Fe-4S] cluster pocket. Residues serine 226, serine 227, asparagine 228, and serine 270 each coordinate (2E)-4-hydroxy-3-methylbut-2-enyl diphosphate. Serine 226, serine 227, asparagine 228, and serine 270 together coordinate dimethylallyl diphosphate. Isopentenyl diphosphate-binding residues include serine 226, serine 227, asparagine 228, and serine 270.

Belongs to the IspH family. The cofactor is [4Fe-4S] cluster.

It catalyses the reaction isopentenyl diphosphate + 2 oxidized [2Fe-2S]-[ferredoxin] + H2O = (2E)-4-hydroxy-3-methylbut-2-enyl diphosphate + 2 reduced [2Fe-2S]-[ferredoxin] + 2 H(+). The catalysed reaction is dimethylallyl diphosphate + 2 oxidized [2Fe-2S]-[ferredoxin] + H2O = (2E)-4-hydroxy-3-methylbut-2-enyl diphosphate + 2 reduced [2Fe-2S]-[ferredoxin] + 2 H(+). Its pathway is isoprenoid biosynthesis; dimethylallyl diphosphate biosynthesis; dimethylallyl diphosphate from (2E)-4-hydroxy-3-methylbutenyl diphosphate: step 1/1. It functions in the pathway isoprenoid biosynthesis; isopentenyl diphosphate biosynthesis via DXP pathway; isopentenyl diphosphate from 1-deoxy-D-xylulose 5-phosphate: step 6/6. Its function is as follows. Catalyzes the conversion of 1-hydroxy-2-methyl-2-(E)-butenyl 4-diphosphate (HMBPP) into a mixture of isopentenyl diphosphate (IPP) and dimethylallyl diphosphate (DMAPP). Acts in the terminal step of the DOXP/MEP pathway for isoprenoid precursor biosynthesis. In Psychrobacter arcticus (strain DSM 17307 / VKM B-2377 / 273-4), this protein is 4-hydroxy-3-methylbut-2-enyl diphosphate reductase.